Here is a 462-residue protein sequence, read N- to C-terminus: MPINSFENYPMSWKPSIDKAEKPIYKALAGQLEQDILNGVLLPGTKLPPQRELADYLDLNVSTISKAFKVCELKGLLSATVGSGTFVSYDALSNAYLLEDTKPTHLIEMGAILPDHASYEPLLYQLKNMVHEEDYEKWFSYGRAGESLWQKDAAVKLIQRGGFETSVDHILFANGGQNAIAATLASLCKPGDRIGVDHHTYPGLKTVASLLSVQIVPIKSENDEMSPESLEYACKNENIKGLYLIPDYHNPTTSFMSVENRRMVADIVKKYNLFVIEDASYHLLNKNPLPALASFAPQQVIHIASLSKSLAPGLRLAYVAVPRQYKEPISKALYNLNITVSPLLAELTARTIVSNQFEVLIESHREQTIRRNQLVNRYVAGYTCLGVETGIFRWLLLPGKMSGAEFEELAARLGVQVYAAERFVVGNSCPERAVRVSVCAPKTLEELEQGLMILRRLLDDLT.

Positions 22–90 constitute an HTH gntR-type domain; that stretch reads KPIYKALAGQ…VGSGTFVSYD (69 aa). The segment at residues 50–69 is a DNA-binding region (H-T-H motif); it reads QRELADYLDLNVSTISKAFK. Position 308 is an N6-(pyridoxal phosphate)lysine (lysine 308).

It in the C-terminal section; belongs to the class-I pyridoxal-phosphate-dependent aminotransferase family. It depends on pyridoxal 5'-phosphate as a cofactor.

This is an uncharacterized protein from Bacillus subtilis (strain 168).